A 105-amino-acid chain; its full sequence is Large ribosomal subunit protein P2 (105 aa).

Residues 84–105 (AEAKKEEPEEEADDDMGFGLFD) form a disordered region.

The protein belongs to the eukaryotic ribosomal protein P1/P2 family. In terms of assembly, P1 and P2 exist as dimers at the large ribosomal subunit. Post-translationally, phosphorylated.

Functionally, plays an important role in the elongation step of protein synthesis. The sequence is that of Large ribosomal subunit protein P2 (ARP-1) from Leishmania donovani.